The primary structure comprises 767 residues: Probable beta-glucosidase K (767 aa).

An N-linked (GlcNAc...) asparagine glycan is attached at Asn-19. Residue Asp-232 is part of the active site. N-linked (GlcNAc...) asparagine glycans are attached at residues Asn-324, Asn-477, and Asn-749. The region spanning Glu-405–Val-552 is the PA14 domain. Residues Leu-727–Arg-767 are disordered. Residues Arg-743–Gln-757 are compositionally biased toward polar residues.

It belongs to the glycosyl hydrolase 3 family.

The protein localises to the secreted. The catalysed reaction is Hydrolysis of terminal, non-reducing beta-D-glucosyl residues with release of beta-D-glucose.. The protein operates within glycan metabolism; cellulose degradation. Functionally, beta-glucosidases are one of a number of cellulolytic enzymes involved in the degradation of cellulosic biomass. Catalyzes the last step releasing glucose from the inhibitory cellobiose. This is Probable beta-glucosidase K (bglK) from Aspergillus fumigatus (strain ATCC MYA-4609 / CBS 101355 / FGSC A1100 / Af293) (Neosartorya fumigata).